The primary structure comprises 500 residues: L-arabinose isomerase (500 aa).

Glu306, Glu333, His350, and His450 together coordinate Mn(2+).

The protein belongs to the arabinose isomerase family. In terms of assembly, homohexamer. Mn(2+) serves as cofactor.

The catalysed reaction is beta-L-arabinopyranose = L-ribulose. Its pathway is carbohydrate degradation; L-arabinose degradation via L-ribulose; D-xylulose 5-phosphate from L-arabinose (bacterial route): step 1/3. Its function is as follows. Catalyzes the conversion of L-arabinose to L-ribulose. This is L-arabinose isomerase from Salmonella typhi.